Reading from the N-terminus, the 356-residue chain is MSGKTKRLMVMAGGTGGHVFPGLAVAHHLMAQGWQVRWLGTADRMEASLVPQHGIEIDFIKISGLRGKGLMAQLTAPIRIYRAVRQAQKIMRDYQPNVVLGMGGYVSGPGGLAAWLCGVPVVLHEQNGIAGLTNRWLARIAKKVLQAFPGAFPNADVVGNPVRTDVLALPLPAVRLSGREGPIRVLVIGGSQGARILNQTLPLVAASLGEQITLWHQVGKGALPEVSQAYQQAGQAGHLVVEFIDDMAAAYAWADVVVCRSGALTVSEVAAAGLPAIFVPFQHKDRQQYWNALPLEKAGAAKIIEQPQFTATSVSSLLASWDRATLLSMAERARSVAIPDATERVAAEVVAASKSA.

UDP-N-acetyl-alpha-D-glucosamine contacts are provided by residues 15–17, Asn127, Arg163, Ser191, Ile244, 263–268, and Gln288; these read TGG and ALTVSE.

It belongs to the glycosyltransferase 28 family. MurG subfamily.

It localises to the cell inner membrane. It carries out the reaction di-trans,octa-cis-undecaprenyl diphospho-N-acetyl-alpha-D-muramoyl-L-alanyl-D-glutamyl-meso-2,6-diaminopimeloyl-D-alanyl-D-alanine + UDP-N-acetyl-alpha-D-glucosamine = di-trans,octa-cis-undecaprenyl diphospho-[N-acetyl-alpha-D-glucosaminyl-(1-&gt;4)]-N-acetyl-alpha-D-muramoyl-L-alanyl-D-glutamyl-meso-2,6-diaminopimeloyl-D-alanyl-D-alanine + UDP + H(+). It participates in cell wall biogenesis; peptidoglycan biosynthesis. Functionally, cell wall formation. Catalyzes the transfer of a GlcNAc subunit on undecaprenyl-pyrophosphoryl-MurNAc-pentapeptide (lipid intermediate I) to form undecaprenyl-pyrophosphoryl-MurNAc-(pentapeptide)GlcNAc (lipid intermediate II). The polypeptide is UDP-N-acetylglucosamine--N-acetylmuramyl-(pentapeptide) pyrophosphoryl-undecaprenol N-acetylglucosamine transferase (Yersinia pestis bv. Antiqua (strain Antiqua)).